Reading from the N-terminus, the 218-residue chain is Large ribosomal subunit protein bL25 (218 aa).

Residues 197 to 218 (PAEESGEKPVAHIEEKESTEKE) form a disordered region. Residues 201 to 218 (SGEKPVAHIEEKESTEKE) show a composition bias toward basic and acidic residues.

The protein belongs to the bacterial ribosomal protein bL25 family. CTC subfamily. In terms of assembly, part of the 50S ribosomal subunit; part of the 5S rRNA/L5/L18/L25 subcomplex. Contacts the 5S rRNA. Binds to the 5S rRNA independently of L5 and L18.

In terms of biological role, this is one of the proteins that binds to the 5S RNA in the ribosome where it forms part of the central protuberance. The protein is Large ribosomal subunit protein bL25 of Dehalococcoides mccartyi (strain ATCC BAA-2100 / JCM 16839 / KCTC 5957 / BAV1).